The following is a 230-amino-acid chain: Cell division ATP-binding protein FtsE (230 aa).

The ABC transporter domain occupies 4-229; it reads IEMRDVVKKY…DESKGEYGYD (226 aa). Residue 37-44 participates in ATP binding; it reads GPSGAGKS.

The protein belongs to the ABC transporter superfamily. As to quaternary structure, homodimer. Interacts with FtsX; forms a membrane-associated complex. Interacts with pcsB.

It is found in the cell membrane. The catalysed reaction is ATP + H2O = ADP + phosphate + H(+). Part of the ABC transporter FtsEX involved in cellular division. Has ATPase activity. Essential for cell division and viability. This Streptococcus pneumoniae serotype 2 (strain D39 / NCTC 7466) protein is Cell division ATP-binding protein FtsE.